The sequence spans 604 residues: Aspartate--tRNA(Asp/Asn) ligase (604 aa).

Glu175 is an L-aspartate binding site. The aspartate stretch occupies residues 199–202; the sequence is QQFK. L-aspartate contacts are provided by Arg221 and His456. 221-223 contacts ATP; that stretch reads RDE. An ATP-binding site is contributed by Glu496. Arg503 provides a ligand contact to L-aspartate. 548–551 is a binding site for ATP; it reads GVDR.

This sequence belongs to the class-II aminoacyl-tRNA synthetase family. Type 1 subfamily. As to quaternary structure, homodimer.

It is found in the cytoplasm. The enzyme catalyses tRNA(Asx) + L-aspartate + ATP = L-aspartyl-tRNA(Asx) + AMP + diphosphate. Functionally, aspartyl-tRNA synthetase with relaxed tRNA specificity since it is able to aspartylate not only its cognate tRNA(Asp) but also tRNA(Asn). Reaction proceeds in two steps: L-aspartate is first activated by ATP to form Asp-AMP and then transferred to the acceptor end of tRNA(Asp/Asn). This chain is Aspartate--tRNA(Asp/Asn) ligase, found in Methylobacterium nodulans (strain LMG 21967 / CNCM I-2342 / ORS 2060).